The chain runs to 325 residues: Aldo-keto reductase family 1 member A1 (325 aa).

Thr-2 is modified (N-acetylthreonine). Phosphoserine is present on Ser-4. NADP(+) is bound by residues 11-20, Thr-21, and Trp-22; that span reads GQKMPLIGLG. The residue at position 38 (Ser-38) is a Phosphoserine. Asp-45 is a binding site for NADP(+). Tyr-50 (proton donor) is an active-site residue. N6-acetyllysine; alternate is present on Lys-127. Lys-127 is subject to N6-succinyllysine; alternate. Lys-145 bears the N6-succinyllysine mark. The NADP(+) site is built by Ser-162, Asn-163, Ser-211, Leu-213, Ser-215, Ser-216, Lys-263, Ser-264, Ile-265, Arg-269, Gln-272, and Asn-273. Ser-211 carries the post-translational modification Phosphoserine.

The protein belongs to the aldo/keto reductase family. In terms of assembly, monomer. In terms of tissue distribution, widely expressed.

It is found in the cytoplasm. It localises to the cytosol. The protein localises to the apical cell membrane. The enzyme catalyses a primary alcohol + NADP(+) = an aldehyde + NADPH + H(+). It carries out the reaction L-gulonate + NADP(+) = aldehydo-D-glucuronate + NADPH + H(+). The catalysed reaction is L-gulono-1,4-lactone + NADP(+) = D-glucurono-3,6-lactone + NADPH + H(+). It catalyses the reaction allyl alcohol + NADP(+) = acrolein + NADPH + H(+). The enzyme catalyses glycerol + NADP(+) = D-glyceraldehyde + NADPH + H(+). It carries out the reaction glycerol + NADP(+) = L-glyceraldehyde + NADPH + H(+). The catalysed reaction is hydroxyacetone + NADP(+) = methylglyoxal + NADPH + H(+). It catalyses the reaction 3-deoxyfructose + NADP(+) = 3-deoxyglucosone + NADPH + H(+). The enzyme catalyses (R)-mevalonate + NADP(+) = (R)-mevaldate + NADPH + H(+). It carries out the reaction pyridine 3-methanol + NADP(+) = pyridine-3-carbaldehyde + NADPH + H(+). The catalysed reaction is S-nitroso-CoA + NADPH + H(+) = sulfinamide-CoA + NADP(+). It catalyses the reaction S-nitrosoglutathione + NADPH + H(+) = S-(hydroxysulfenamide)glutathione + NADP(+). Its function is as follows. Catalyzes the NADPH-dependent reduction of a wide variety of carbonyl-containing compounds to their corresponding alcohols. Displays enzymatic activity towards endogenous metabolites such as aromatic and aliphatic aldehydes, ketones, monosaccharides and bile acids, with a preference for negatively charged substrates, such as glucuronate and succinic semialdehyde. Plays an important role in ascorbic acid biosynthesis by catalyzing the reduction of D-glucuronic acid and D-glucurono-gamma-lactone. Functions as a detoxifiying enzyme by reducing a range of toxic aldehydes. Reduces methylglyoxal and 3-deoxyglucosone, which are present at elevated levels under hyperglycemic conditions and are cytotoxic. Involved in the detoxification of lipid-derived aldehydes like acrolein. Plays a role in the activation of procarcinogens, such as polycyclic aromatic hydrocarbon trans-dihydrodiols, and in the metabolism of various xenobiotics and drugs. Also acts as an inhibitor of protein S-nitrosylation by mediating degradation of S-nitroso-coenzyme A (S-nitroso-CoA), a cofactor required to S-nitrosylate proteins. S-nitroso-CoA reductase activity is involved in reprogramming intermediary metabolism in renal proximal tubules, notably by inhibiting protein S-nitrosylation of isoform 2 of PKM (PKM2). Also acts as a S-nitroso-glutathione reductase by catalyzing the NADPH-dependent reduction of S-nitrosoglutathione. Displays no reductase activity towards retinoids. In Mus musculus (Mouse), this protein is Aldo-keto reductase family 1 member A1.